Here is a 170-residue protein sequence, read N- to C-terminus: Transmembrane protein 252 (170 aa).

2 helical membrane passes run isoleucine 8–isoleucine 28 and leucine 40–tryptophan 60. The disordered stretch occupies residues cysteine 112 to tyrosine 147.

Its subcellular location is the membrane. The polypeptide is Transmembrane protein 252 (TMEM252) (Homo sapiens (Human)).